The following is a 313-amino-acid chain: Acetyl-coenzyme A carboxylase carboxyl transferase subunit alpha (313 aa).

The CoA carboxyltransferase C-terminal domain maps to Lys34 to Glu288.

It belongs to the AccA family. Acetyl-CoA carboxylase is a heterohexamer composed of biotin carboxyl carrier protein (AccB), biotin carboxylase (AccC) and two subunits each of ACCase subunit alpha (AccA) and ACCase subunit beta (AccD).

The protein resides in the cytoplasm. The enzyme catalyses N(6)-carboxybiotinyl-L-lysyl-[protein] + acetyl-CoA = N(6)-biotinyl-L-lysyl-[protein] + malonyl-CoA. Its pathway is lipid metabolism; malonyl-CoA biosynthesis; malonyl-CoA from acetyl-CoA: step 1/1. Its function is as follows. Component of the acetyl coenzyme A carboxylase (ACC) complex. First, biotin carboxylase catalyzes the carboxylation of biotin on its carrier protein (BCCP) and then the CO(2) group is transferred by the carboxyltransferase to acetyl-CoA to form malonyl-CoA. This is Acetyl-coenzyme A carboxylase carboxyl transferase subunit alpha from Fusobacterium nucleatum subsp. nucleatum (strain ATCC 25586 / DSM 15643 / BCRC 10681 / CIP 101130 / JCM 8532 / KCTC 2640 / LMG 13131 / VPI 4355).